The following is a 97-amino-acid chain: MALTKAEMAEHLFETLGINKRVAKEMVEAFFEEIRQALESGEQVKLSGFGNFDLRDKNQRPGRNPKTGEDIPISARRVVTFRPGQKLKSRVEEANAK.

The interval 49–71 is disordered; it reads FGNFDLRDKNQRPGRNPKTGEDI.

The protein belongs to the bacterial histone-like protein family. As to quaternary structure, heterodimer of an alpha and a beta chain.

Functionally, this protein is one of the two subunits of integration host factor, a specific DNA-binding protein that functions in genetic recombination as well as in transcriptional and translational control. The protein is Integration host factor subunit alpha of Shewanella woodyi (strain ATCC 51908 / MS32).